A 361-amino-acid polypeptide reads, in one-letter code: Molybdopterin synthase catalytic subunit (361 aa).

Residues 101–102, K117, and 124–126 contribute to the substrate site; these read HR and KKE.

The protein belongs to the MoaE family. MOCS2B subfamily. As to quaternary structure, heterotetramer; composed of 2 small (Mocs2A) and 2 large (Mocs2B) subunits.

Its subcellular location is the cytoplasm. The enzyme catalyses 2 [molybdopterin-synthase sulfur-carrier protein]-C-terminal-Gly-aminoethanethioate + cyclic pyranopterin phosphate + H2O = molybdopterin + 2 [molybdopterin-synthase sulfur-carrier protein]-C-terminal Gly-Gly + 2 H(+). It participates in cofactor biosynthesis; molybdopterin biosynthesis. In terms of biological role, catalytic subunit of the molybdopterin synthase complex, a complex that catalyzes the conversion of precursor Z into molybdopterin. Acts by mediating the incorporation of 2 sulfur atoms from thiocarboxylated Mocs2A into precursor Z to generate a dithiolene group. This Drosophila pseudoobscura pseudoobscura (Fruit fly) protein is Molybdopterin synthase catalytic subunit.